Reading from the N-terminus, the 403-residue chain is S-adenosylmethionine synthase (403 aa).

H15 provides a ligand contact to ATP. A Mg(2+)-binding site is contributed by D17. Residue E43 coordinates K(+). L-methionine contacts are provided by E56 and Q99. Residues 99–109 are flexible loop; it reads QSPHIAQGVDR. Residues 166 to 168, 232 to 233, D241, 247 to 248, A264, and K268 each bind ATP; these read DAK, KF, and RK. D241 serves as a coordination point for L-methionine. K272 serves as a coordination point for L-methionine.

This sequence belongs to the AdoMet synthase family. In terms of assembly, homotetramer; dimer of dimers. Mg(2+) serves as cofactor. K(+) is required as a cofactor.

It is found in the cytoplasm. It catalyses the reaction L-methionine + ATP + H2O = S-adenosyl-L-methionine + phosphate + diphosphate. It functions in the pathway amino-acid biosynthesis; S-adenosyl-L-methionine biosynthesis; S-adenosyl-L-methionine from L-methionine: step 1/1. Functionally, catalyzes the formation of S-adenosylmethionine (AdoMet) from methionine and ATP. The overall synthetic reaction is composed of two sequential steps, AdoMet formation and the subsequent tripolyphosphate hydrolysis which occurs prior to release of AdoMet from the enzyme. This chain is S-adenosylmethionine synthase, found in Stenotrophomonas maltophilia (strain R551-3).